We begin with the raw amino-acid sequence, 116 residues long: NADH-ubiquinone oxidoreductase chain 3 (116 aa).

3 helical membrane-spanning segments follow: residues 3-23 (LITTIIAITITLSAVLATISF), 56-76 (FFLIAILFLLFDLEIALLLPL), and 85-105 (PALTLAWSAAVLALLTLGLIY).

This sequence belongs to the complex I subunit 3 family.

The protein localises to the mitochondrion membrane. It carries out the reaction a ubiquinone + NADH + 5 H(+)(in) = a ubiquinol + NAD(+) + 4 H(+)(out). Its function is as follows. Core subunit of the mitochondrial membrane respiratory chain NADH dehydrogenase (Complex I) that is believed to belong to the minimal assembly required for catalysis. Complex I functions in the transfer of electrons from NADH to the respiratory chain. The immediate electron acceptor for the enzyme is believed to be ubiquinone. This is NADH-ubiquinone oxidoreductase chain 3 (MT-ND3) from Salmo salar (Atlantic salmon).